A 480-amino-acid chain; its full sequence is Immune evasion protein OPG047 (480 aa).

The 81-residue stretch at 10 to 90 (CKNILALSMT…SYTGKVYIDS (81 aa)) folds into the BTB domain. In terms of domain architecture, BACK spans 125 to 223 (CVECYMMGIE…NYLSPRGINN (99 aa)). 5 Kelch repeats span residues 273 to 319 (VVYL…PANN), 320 to 363 (KLYV…SINN), 365 to 408 (IYVM…VFGR), 410 to 447 (LFLV…IVDN), and 448 to 480 (KLLL…WDGK).

It belongs to the orthopoxvirus OPG047 family.

Functionally, might have a role in the suppression of host immune response. The chain is Immune evasion protein OPG047 (OPG047) from Vaccinia virus (strain Western Reserve) (VACV).